The primary structure comprises 1374 residues: Alpha,alpha-trehalose-phosphate synthase [UDP-forming] 1 (1374 aa).

Disordered regions lie at residues Asp28–Asp66, Tyr86–Gly117, and Lys1352–Gln1374. Composition is skewed to basic and acidic residues over residues Asp56–Asp66 and Tyr86–Asp95. Acidic residues-rich tracts occupy residues Gln96–Asp109 and Tyr1356–Asp1368.

This sequence in the N-terminal section; belongs to the glycosyltransferase 20 family. It in the C-terminal section; belongs to the gob-1 trehalose phosphatase family.

The enzyme catalyses D-glucose 6-phosphate + UDP-alpha-D-glucose = alpha,alpha-trehalose 6-phosphate + UDP + H(+). Catalyzes the production of trehalose from glucose-6-phosphate and UDP-alpha-D-glucose in a 2 step process. This chain is Alpha,alpha-trehalose-phosphate synthase [UDP-forming] 1 (tps-1), found in Caenorhabditis briggsae.